Here is a 100-residue protein sequence, read N- to C-terminus: Protein SAMBA (100 aa).

Residues 1–40 are disordered; the sequence is MNGASPAHSLVSTTAVAGGGGSSGAAAGLDDFHFPPDIPS.

Interacts with CDC27B and CYCA2-3. As to expression, expressed in embryos, germinating seeds, hypocotyls and pollen grains.

In terms of biological role, plays an important role in organ size control. Acts as negative regulator of the anaphase-promoting complex/cyclosome (APC/C). Regulates cell proliferation during early development by targeting CYCA2-3 for APC/C-mediated degradation. Required for mitosis I during pollen microspore development. The protein is Protein SAMBA of Arabidopsis thaliana (Mouse-ear cress).